A 356-amino-acid chain; its full sequence is Tyrosine recombinase XerS (356 aa).

One can recognise a Core-binding (CB) domain in the interval 16 to 121 (LMPWYVLEYY…ALSSLYKYLT (106 aa)). Residues 169–354 (GFLTYIDQEH…VSDEQKNALD (186 aa)) enclose the Tyr recombinase domain. Catalysis depends on residues Arg210, Lys234, His306, Arg309, and His332. Tyr341 (O-(3'-phospho-DNA)-tyrosine intermediate) is an active-site residue.

It belongs to the 'phage' integrase family. XerS subfamily.

It localises to the cytoplasm. With respect to regulation, ftsK is required for recombination. In terms of biological role, site-specific tyrosine recombinase, which acts by catalyzing the cutting and rejoining of the recombining DNA molecules. Essential to convert dimers of the bacterial chromosome into monomers to permit their segregation at cell division. This is Tyrosine recombinase XerS from Streptococcus pneumoniae serotype 4 (strain ATCC BAA-334 / TIGR4).